A 390-amino-acid polypeptide reads, in one-letter code: Heat stress transcription factor B-2b (390 aa).

Positions 165–212 (TRDGSPVLSGEEQVISSSSSPEPPLVLPQAPSGSGSGGVASGDVGDEN) are disordered. Residues 206 to 237 (GDVGDENERLRRENAQLARELSQMRKLCNNIL) adopt a coiled-coil conformation. Residues 215–244 (LRRENAQLARELSQMRKLCNNILLLMSKYA) are hydrophobic repeat HR-A/B. Positions 318–322 (RKRMR) match the Nuclear localization signal motif. The disordered stretch occupies residues 322 to 363 (RHDGGGDDDHAATVKAEPMDGRPHGKDEQSAETQAWPIYRPR). Basic and acidic residues predominate over residues 323 to 350 (HDGGGDDDHAATVKAEPMDGRPHGKDEQ).

Belongs to the HSF family. Class B subfamily. As to quaternary structure, homotrimer. Exhibits temperature-dependent phosphorylation.

It localises to the nucleus. Transcriptional regulator that specifically binds DNA of heat shock promoter elements (HSE). The sequence is that of Heat stress transcription factor B-2b (HSFB2B) from Oryza sativa subsp. japonica (Rice).